Here is a 145-residue protein sequence, read N- to C-terminus: D-aminoacyl-tRNA deacylase (145 aa).

The Gly-cisPro motif, important for rejection of L-amino acids motif lies at 137-138 (GP).

Belongs to the DTD family. As to quaternary structure, homodimer.

It is found in the cytoplasm. The catalysed reaction is glycyl-tRNA(Ala) + H2O = tRNA(Ala) + glycine + H(+). The enzyme catalyses a D-aminoacyl-tRNA + H2O = a tRNA + a D-alpha-amino acid + H(+). Its function is as follows. An aminoacyl-tRNA editing enzyme that deacylates mischarged D-aminoacyl-tRNAs. Also deacylates mischarged glycyl-tRNA(Ala), protecting cells against glycine mischarging by AlaRS. Acts via tRNA-based rather than protein-based catalysis; rejects L-amino acids rather than detecting D-amino acids in the active site. By recycling D-aminoacyl-tRNA to D-amino acids and free tRNA molecules, this enzyme counteracts the toxicity associated with the formation of D-aminoacyl-tRNA entities in vivo and helps enforce protein L-homochirality. This is D-aminoacyl-tRNA deacylase from Idiomarina loihiensis (strain ATCC BAA-735 / DSM 15497 / L2-TR).